A 1072-amino-acid polypeptide reads, in one-letter code: DNA-directed RNA polymerase subunit beta (1072 aa).

It belongs to the RNA polymerase beta chain family. As to quaternary structure, in plastids the minimal PEP RNA polymerase catalytic core is composed of four subunits: alpha, beta, beta', and beta''. When a (nuclear-encoded) sigma factor is associated with the core the holoenzyme is formed, which can initiate transcription.

The protein resides in the plastid. Its subcellular location is the chloroplast. It carries out the reaction RNA(n) + a ribonucleoside 5'-triphosphate = RNA(n+1) + diphosphate. Its function is as follows. DNA-dependent RNA polymerase catalyzes the transcription of DNA into RNA using the four ribonucleoside triphosphates as substrates. This chain is DNA-directed RNA polymerase subunit beta, found in Olimarabidopsis pumila (Dwarf rocket).